Consider the following 326-residue polypeptide: Metallophosphoesterase domain-containing protein 1 (326 aa).

It belongs to the UPF0046 family. In terms of tissue distribution, expressed predominantly in adult brain.

May have metallophosphoesterase activity (in vitro). The protein is Metallophosphoesterase domain-containing protein 1 (MPPED1) of Homo sapiens (Human).